The following is a 232-amino-acid chain: Endonuclease NucS (232 aa).

This sequence belongs to the NucS endonuclease family.

The protein localises to the cytoplasm. In terms of biological role, cleaves both 3' and 5' ssDNA extremities of branched DNA structures. The protein is Endonuclease NucS of Mycobacteroides abscessus (strain ATCC 19977 / DSM 44196 / CCUG 20993 / CIP 104536 / JCM 13569 / NCTC 13031 / TMC 1543 / L948) (Mycobacterium abscessus).